Here is a 250-residue protein sequence, read N- to C-terminus: Vitamin B12 import ATP-binding protein BtuD (250 aa).

In terms of domain architecture, ABC transporter spans 3-233 (LRQASVLPRL…EVLSPVFGVA (231 aa)). 29-36 (GPNGAGKS) provides a ligand contact to ATP.

The protein belongs to the ABC transporter superfamily. Vitamin B12 importer (TC 3.A.1.13.1) family. As to quaternary structure, the complex is composed of two ATP-binding proteins (BtuD), two transmembrane proteins (BtuC) and a solute-binding protein (BtuF).

It localises to the cell inner membrane. The enzyme catalyses an R-cob(III)alamin(out) + ATP + H2O = an R-cob(III)alamin(in) + ADP + phosphate + H(+). Its function is as follows. Part of the ABC transporter complex BtuCDF involved in vitamin B12 import. Responsible for energy coupling to the transport system. The chain is Vitamin B12 import ATP-binding protein BtuD from Pectobacterium atrosepticum (strain SCRI 1043 / ATCC BAA-672) (Erwinia carotovora subsp. atroseptica).